A 426-amino-acid polypeptide reads, in one-letter code: MLLYNSFTEGLKFTKTKILLRYYASALIDVPRDDVIEDAGVSKSQAMQNIRDRWYYPPDLANDLQDLDMPKAMKQEIFACAWEYTRCVIPQYTNWPRYVAFMRIIIIGIVAEFRGNLVDVTAGDDMMGYNLSTVLDALFLGTADRENMCREYRSFLLITADKSSERRNGELFRRYVNALAHSPRQWFRMRDADALARFTIAASLACNDLDDLKFSNMEYEILTEIGDTLYDAVAFFKHRSEGETNSTFAYMPPDMRVEAFHQAREVLWAMDVALAPKTTLQGVINFVRFFGGPIHMMMRRYRFVEEHLTIGQVETEKVVDQTRKNFKLWNRLDAKDAKAGDEKRYKDIVSNNSGEVMFPGLVEFLENEDNCPDCCFRESYGAETKHQFGGVQICSACREEWGRYMKSLPDRAVKAFPELAYVLSIP.

It belongs to the alpha-ionylideneethane synthase family.

Its pathway is hormone biosynthesis. In terms of biological role, alpha-ionylideneethane synthase; part of the gene cluster that mediates the biosynthesis of abscisic acid (ABA), a phytohormone that acts antagonistically toward salicylic acid (SA), jasmonic acid (JA) and ethylene (ETH) signaling, to impede plant defense responses. The first step of the pathway catalyzes the reaction from farnesyl diphosphate to alpha-ionylideneethane performed by the alpha-ionylideneethane synthase abl3 via a three-step reaction mechanism involving 2 neutral intermediates, beta-farnesene and allofarnesene. The cytochrome P450 monooxygenase abl1 might then be involved in the conversion of alpha-ionylideneethane to alpha-ionylideneacetic acid. Alpha-ionylideneacetic acid is further converted to abscisic acid in 2 steps involving the cytochrome P450 monooxygenase abl2 and the short-chain dehydrogenase/reductase abl4, via the intermediates 1'-deoxy-ABA or 1',4'-trans-diol-ABA, depending on the order of action of these 2 enzymes. Abl2 is responsible for the hydroxylation of carbon atom C-1' and abl4 might be involved in the oxidation of the C-4' carbon atom. The sequence is that of Alpha-ionylideneethane synthase abl3 from Leptosphaeria maculans (strain JN3 / isolate v23.1.3 / race Av1-4-5-6-7-8) (Blackleg fungus).